Reading from the N-terminus, the 317-residue chain is Pantothenate kinase (317 aa).

Residue 99-106 (GSVSVGKS) participates in ATP binding.

The protein belongs to the prokaryotic pantothenate kinase family.

It localises to the cytoplasm. It catalyses the reaction (R)-pantothenate + ATP = (R)-4'-phosphopantothenate + ADP + H(+). It participates in cofactor biosynthesis; coenzyme A biosynthesis; CoA from (R)-pantothenate: step 1/5. This chain is Pantothenate kinase, found in Mannheimia succiniciproducens (strain KCTC 0769BP / MBEL55E).